A 425-amino-acid polypeptide reads, in one-letter code: Trigger factor (425 aa).

A PPIase FKBP-type domain is found at 163 to 248 (GDTAVIDFEG…VHEIKTKELP (86 aa)).

It belongs to the FKBP-type PPIase family. Tig subfamily.

It is found in the cytoplasm. It catalyses the reaction [protein]-peptidylproline (omega=180) = [protein]-peptidylproline (omega=0). Functionally, involved in protein export. Acts as a chaperone by maintaining the newly synthesized protein in an open conformation. Functions as a peptidyl-prolyl cis-trans isomerase. In Bacillus anthracis (strain A0248), this protein is Trigger factor.